Consider the following 122-residue polypeptide: Large ribosomal subunit protein uL14 (122 aa).

This sequence belongs to the universal ribosomal protein uL14 family. As to quaternary structure, part of the 50S ribosomal subunit. Forms a cluster with proteins L3 and L19. In the 70S ribosome, L14 and L19 interact and together make contacts with the 16S rRNA in bridges B5 and B8.

Functionally, binds to 23S rRNA. Forms part of two intersubunit bridges in the 70S ribosome. The chain is Large ribosomal subunit protein uL14 from Geobacillus sp. (strain WCH70).